Consider the following 135-residue polypeptide: Histone H3 type 3 (135 aa).

Residues 1 to 40 (MARTKQTARKSTGGKAPRKQLATKAARKTPATGGVKKPHR) form a disordered region. Lysine 5 is modified (N6-methyllysine). Lysine 10 is subject to N6-acetyllysine; alternate. Lysine 10 is subject to N6-methyllysine; alternate. Serine 11 carries the phosphoserine modification. Position 12 is a phosphothreonine (threonine 12). Residues lysine 15, lysine 19, and lysine 24 each carry the N6-acetyllysine modification. Position 28 is an N6-acetyllysine; alternate (lysine 28). Lysine 28 carries the N6-methyllysine; alternate modification. N6-methyllysine is present on residues lysine 36 and lysine 37.

This sequence belongs to the histone H3 family. As to quaternary structure, the nucleosome is a histone octamer containing two molecules each of H2A, H2B, H3 and H4 assembled in one H3-H4 heterotetramer and two H2A-H2B heterodimers. The octamer wraps approximately 147 bp of DNA. Acetylation is generally linked to gene activation. Acetylated to form H3K9ac (11%), H3K14ac (17%), H3K18ac (11%), H3K23ac (16%) and H3K27ac (7%). H3K4, H3K35 and H3K36 are not acetylated. H3K4me prevents acetylation. 32% of the histone H3 are acetylated with, on average, 2.4 acetyl-Lys. They are all continuously deacatylated and re-acetylated with a half-life of approximately 2 minutes. In terms of processing, monomethylated to form H3K4me1 (81%), H3K9me1 (16%), H3K27me1 (25%), H3K35me1 (25%) and H3K36me1 (5%). No methylation at H3K14, H3K18 and H3K23. Methylated by a protein complex that includes Mut11. Set1 methylates specifically H3K4. H3K4me1 is associated with silenced euchromatin. Set3 forms H3K9me1, while H3K9me2 is undetected. H3K9me1 is specifically associated with silent, multi-copy transgenes. Post-translationally, no phosphorylation detected.

The protein resides in the nucleus. The protein localises to the chromosome. Functionally, core component of nucleosome. Nucleosomes wrap and compact DNA into chromatin, limiting DNA accessibility to the cellular machineries which require DNA as a template. Histones thereby play a central role in transcription regulation, DNA repair, DNA replication and chromosomal stability. DNA accessibility is regulated via a complex set of post-translational modifications of histones, also called histone code, and nucleosome remodeling. The protein is Histone H3 type 3 (ch3-IV) of Chlamydomonas reinhardtii (Chlamydomonas smithii).